A 608-amino-acid chain; its full sequence is Granule-bound starch synthase 1, chloroplastic/amyloplastic (608 aa).

The N-terminal 78 residues, 1-78 (MATVIAAHFV…NGRPAAKIIC (78 aa)), are a transit peptide targeting the chloroplast. Position 96 (Lys-96) interacts with ADP-alpha-D-glucose. The disordered stretch occupies residues 587–608 (GSEPGTEGEEIAPLAKENVPTP).

The protein belongs to the glycosyltransferase 1 family. Bacterial/plant glycogen synthase subfamily. In terms of tissue distribution, synthesized in a number of different organs, but most abundantly in tubers.

Its subcellular location is the plastid. The protein localises to the chloroplast. It localises to the amyloplast. The enzyme catalyses an NDP-alpha-D-glucose + [(1-&gt;4)-alpha-D-glucosyl](n) = [(1-&gt;4)-alpha-D-glucosyl](n+1) + a ribonucleoside 5'-diphosphate + H(+). The protein operates within glycan biosynthesis; starch biosynthesis. Its function is as follows. Responsible for the synthesis of amylose in reserve starch. This is Granule-bound starch synthase 1, chloroplastic/amyloplastic (WAXY) from Manihot esculenta (Cassava).